Here is a 169-residue protein sequence, read N- to C-terminus: Peptide methionine sulfoxide reductase MsrA (169 aa).

The active site involves C13.

The protein belongs to the MsrA Met sulfoxide reductase family.

The catalysed reaction is L-methionyl-[protein] + [thioredoxin]-disulfide + H2O = L-methionyl-(S)-S-oxide-[protein] + [thioredoxin]-dithiol. It catalyses the reaction [thioredoxin]-disulfide + L-methionine + H2O = L-methionine (S)-S-oxide + [thioredoxin]-dithiol. Its function is as follows. Has an important function as a repair enzyme for proteins that have been inactivated by oxidation. Catalyzes the reversible oxidation-reduction of methionine sulfoxide in proteins to methionine. This chain is Peptide methionine sulfoxide reductase MsrA, found in Mycolicibacterium vanbaalenii (strain DSM 7251 / JCM 13017 / BCRC 16820 / KCTC 9966 / NRRL B-24157 / PYR-1) (Mycobacterium vanbaalenii).